Reading from the N-terminus, the 202-residue chain is dITP/XTP pyrophosphatase (202 aa).

7–12 contributes to the substrate binding site; that stretch reads SNNPGK. Positions 39 and 68 each coordinate Mg(2+). The active-site Proton acceptor is Asp68. Substrate-binding positions include Ala69, 157 to 160, Lys180, and 185 to 186; these read FGFD and HR.

This sequence belongs to the HAM1 NTPase family. Homodimer. Mg(2+) is required as a cofactor.

It carries out the reaction XTP + H2O = XMP + diphosphate + H(+). The enzyme catalyses dITP + H2O = dIMP + diphosphate + H(+). It catalyses the reaction ITP + H2O = IMP + diphosphate + H(+). In terms of biological role, pyrophosphatase that catalyzes the hydrolysis of nucleoside triphosphates to their monophosphate derivatives, with a high preference for the non-canonical purine nucleotides XTP (xanthosine triphosphate), dITP (deoxyinosine triphosphate) and ITP. Seems to function as a house-cleaning enzyme that removes non-canonical purine nucleotides from the nucleotide pool, thus preventing their incorporation into DNA/RNA and avoiding chromosomal lesions. The sequence is that of dITP/XTP pyrophosphatase from Polaromonas naphthalenivorans (strain CJ2).